A 214-amino-acid polypeptide reads, in one-letter code: ATP phosphoribosyltransferase (214 aa).

It belongs to the ATP phosphoribosyltransferase family. Short subfamily. As to quaternary structure, heteromultimer composed of HisG and HisZ subunits.

It is found in the cytoplasm. It carries out the reaction 1-(5-phospho-beta-D-ribosyl)-ATP + diphosphate = 5-phospho-alpha-D-ribose 1-diphosphate + ATP. The protein operates within amino-acid biosynthesis; L-histidine biosynthesis; L-histidine from 5-phospho-alpha-D-ribose 1-diphosphate: step 1/9. Functionally, catalyzes the condensation of ATP and 5-phosphoribose 1-diphosphate to form N'-(5'-phosphoribosyl)-ATP (PR-ATP). Has a crucial role in the pathway because the rate of histidine biosynthesis seems to be controlled primarily by regulation of HisG enzymatic activity. The protein is ATP phosphoribosyltransferase of Halorhodospira halophila (strain DSM 244 / SL1) (Ectothiorhodospira halophila (strain DSM 244 / SL1)).